Consider the following 256-residue polypeptide: Stage 0 sporulation protein A homolog (256 aa).

One can recognise a Response regulatory domain in the interval 5-123 (KVLIADDNRE…VLGNRLRQLA (119 aa)). The Ca(2+) site is built by Asp-10, Asp-11, and Asp-56. Asp-56 is modified (4-aspartylphosphate). The segment at residues 188 to 207 (PLIARKYMTTPSRVERAIRH) is a DNA-binding region (H-T-H motif).

It depends on Ca(2+) as a cofactor.

The protein resides in the cytoplasm. In terms of biological role, may play the central regulatory role in sporulation. It may be an element of the effector pathway responsible for the activation of sporulation genes in response to nutritional stress. Spo0A may act in concert with spo0H (a sigma factor) to control the expression of some genes that are critical to the sporulation process. The protein is Stage 0 sporulation protein A homolog (spo0A) of Moorella thermoacetica (strain ATCC 39073 / JCM 9320).